A 302-amino-acid polypeptide reads, in one-letter code: Phosphoribosylaminoimidazole-succinocarboxamide synthase (302 aa).

The protein belongs to the SAICAR synthetase family.

The catalysed reaction is 5-amino-1-(5-phospho-D-ribosyl)imidazole-4-carboxylate + L-aspartate + ATP = (2S)-2-[5-amino-1-(5-phospho-beta-D-ribosyl)imidazole-4-carboxamido]succinate + ADP + phosphate + 2 H(+). Its pathway is purine metabolism; IMP biosynthesis via de novo pathway; 5-amino-1-(5-phospho-D-ribosyl)imidazole-4-carboxamide from 5-amino-1-(5-phospho-D-ribosyl)imidazole-4-carboxylate: step 1/2. This Cupriavidus pinatubonensis (strain JMP 134 / LMG 1197) (Cupriavidus necator (strain JMP 134)) protein is Phosphoribosylaminoimidazole-succinocarboxamide synthase.